The following is a 530-amino-acid chain: Chaperonin GroEL, chloroplastic (530 aa).

Residues 29-32, 86-90, glycine 414, 480-482, and aspartate 496 each bind ATP; these read TLGP, DGTTT, and DAL.

The protein belongs to the chaperonin (HSP60) family. As to quaternary structure, forms a cylinder of 14 subunits composed of two heptameric rings stacked back-to-back. Interacts with the co-chaperonin GroES.

It localises to the plastid. It is found in the chloroplast. The catalysed reaction is ATP + H2O + a folded polypeptide = ADP + phosphate + an unfolded polypeptide.. Functionally, together with its co-chaperonin GroES, plays an essential role in assisting protein folding. The GroEL-GroES system forms a nano-cage that allows encapsulation of the non-native substrate proteins and provides a physical environment optimized to promote and accelerate protein folding. The polypeptide is Chaperonin GroEL, chloroplastic (Cyanidium caldarium (Red alga)).